Consider the following 471-residue polypeptide: Protoporphyrinogen oxidase (471 aa).

FAD contacts are provided by residues 16–21 (GGGISG), 39–40 (ES), Ala47, 61–64 (GPNS), Val251, Trp408, and 446–448 (VGL).

It belongs to the protoporphyrinogen/coproporphyrinogen oxidase family. Protoporphyrinogen oxidase subfamily. As to quaternary structure, monomer. Homodimer. Requires FAD as cofactor.

It is found in the cytoplasm. Its subcellular location is the cell membrane. It carries out the reaction protoporphyrinogen IX + 3 O2 = protoporphyrin IX + 3 H2O2. Its pathway is porphyrin-containing compound metabolism; protoporphyrin-IX biosynthesis; protoporphyrin-IX from protoporphyrinogen-IX: step 1/1. With respect to regulation, strongly inhibited by acifluorfen. Functionally, catalyzes the 6-electron oxidation of protoporphyrinogen-IX to form protoporphyrin-IX. Does not oxidize coproporphyrinogen III. Involved in the classical protoporphyrin-dependent (PPD) heme b biosynthesis. This is Protoporphyrinogen oxidase from Myxococcus xanthus.